The following is a 559-amino-acid chain: D-2-hydroxyglutarate dehydrogenase, mitochondrial (559 aa).

Residues 1 to 78 (MMMQKLRRSG…GMLLQQYKCF (78 aa)) constitute a mitochondrion transit peptide. One can recognise an FAD-binding PCMH-type domain in the interval 130-309 (YKGSSKLMLL…TKVSILTQPK (180 aa)).

This sequence belongs to the FAD-binding oxidoreductase/transferase type 4 family. In terms of assembly, homodimer. Requires FAD as cofactor.

Its subcellular location is the mitochondrion. It carries out the reaction (R)-2-hydroxyglutarate + A = 2-oxoglutarate + AH2. Its function is as follows. Catalyzes the oxidation of (R)-2-hydroxyglutarate to 2-oxoglutarate. May be involved in the catabolism of propionyl-CoA derived from beta-oxidation. Involved in degradation of lysine for the supply of carbon and electrons to the ETF/ETFQO complex during dark-induced sugar starvation. The protein is D-2-hydroxyglutarate dehydrogenase, mitochondrial (D2HGDH) of Arabidopsis thaliana (Mouse-ear cress).